We begin with the raw amino-acid sequence, 325 residues long: 4-hydroxy-3-methylbut-2-enyl diphosphate reductase (325 aa).

Residue C21 coordinates [4Fe-4S] cluster. (2E)-4-hydroxy-3-methylbut-2-enyl diphosphate-binding residues include H50 and H83. Dimethylallyl diphosphate is bound by residues H50 and H83. H50 and H83 together coordinate isopentenyl diphosphate. Position 105 (C105) interacts with [4Fe-4S] cluster. Residue H133 coordinates (2E)-4-hydroxy-3-methylbut-2-enyl diphosphate. H133 provides a ligand contact to dimethylallyl diphosphate. H133 serves as a coordination point for isopentenyl diphosphate. Residue E135 is the Proton donor of the active site. T173 serves as a coordination point for (2E)-4-hydroxy-3-methylbut-2-enyl diphosphate. C203 is a binding site for [4Fe-4S] cluster. (2E)-4-hydroxy-3-methylbut-2-enyl diphosphate-binding residues include S231, S232, N233, and S275. Dimethylallyl diphosphate contacts are provided by S231, S232, N233, and S275. Isopentenyl diphosphate-binding residues include S231, S232, N233, and S275.

It belongs to the IspH family. The cofactor is [4Fe-4S] cluster.

It carries out the reaction isopentenyl diphosphate + 2 oxidized [2Fe-2S]-[ferredoxin] + H2O = (2E)-4-hydroxy-3-methylbut-2-enyl diphosphate + 2 reduced [2Fe-2S]-[ferredoxin] + 2 H(+). It catalyses the reaction dimethylallyl diphosphate + 2 oxidized [2Fe-2S]-[ferredoxin] + H2O = (2E)-4-hydroxy-3-methylbut-2-enyl diphosphate + 2 reduced [2Fe-2S]-[ferredoxin] + 2 H(+). It participates in isoprenoid biosynthesis; dimethylallyl diphosphate biosynthesis; dimethylallyl diphosphate from (2E)-4-hydroxy-3-methylbutenyl diphosphate: step 1/1. It functions in the pathway isoprenoid biosynthesis; isopentenyl diphosphate biosynthesis via DXP pathway; isopentenyl diphosphate from 1-deoxy-D-xylulose 5-phosphate: step 6/6. Functionally, catalyzes the conversion of 1-hydroxy-2-methyl-2-(E)-butenyl 4-diphosphate (HMBPP) into a mixture of isopentenyl diphosphate (IPP) and dimethylallyl diphosphate (DMAPP). Acts in the terminal step of the DOXP/MEP pathway for isoprenoid precursor biosynthesis. This Bordetella pertussis (strain Tohama I / ATCC BAA-589 / NCTC 13251) protein is 4-hydroxy-3-methylbut-2-enyl diphosphate reductase.